The primary structure comprises 441 residues: tRNA-2-methylthio-N(6)-dimethylallyladenosine synthase (441 aa).

Residues 2–117 form the MTTase N-terminal domain; that stretch reads KGLYIKSYGC…LPELLVKAHR (116 aa). C11, C47, C80, C157, C161, and C164 together coordinate [4Fe-4S] cluster. Positions 143-374 constitute a Radical SAM core domain; it reads KNQETSAFIS…QKLLREQQLA (232 aa).

The protein belongs to the methylthiotransferase family. MiaB subfamily. As to quaternary structure, monomer. [4Fe-4S] cluster serves as cofactor.

Its subcellular location is the cytoplasm. The catalysed reaction is N(6)-dimethylallyladenosine(37) in tRNA + (sulfur carrier)-SH + AH2 + 2 S-adenosyl-L-methionine = 2-methylsulfanyl-N(6)-dimethylallyladenosine(37) in tRNA + (sulfur carrier)-H + 5'-deoxyadenosine + L-methionine + A + S-adenosyl-L-homocysteine + 2 H(+). Its function is as follows. Catalyzes the methylthiolation of N6-(dimethylallyl)adenosine (i(6)A), leading to the formation of 2-methylthio-N6-(dimethylallyl)adenosine (ms(2)i(6)A) at position 37 in tRNAs that read codons beginning with uridine. This Ehrlichia canis (strain Jake) protein is tRNA-2-methylthio-N(6)-dimethylallyladenosine synthase.